Reading from the N-terminus, the 554-residue chain is CTP synthase (554 aa).

Residues 1-265 (MTPLIFVTGG…DEIVIDQFKL (265 aa)) form an amidoligase domain region. A CTP-binding site is contributed by serine 13. Serine 13 serves as a coordination point for UTP. Residues 14–19 (SLGKGI) and aspartate 71 each bind ATP. Aspartate 71 and glutamate 139 together coordinate Mg(2+). Residues 146–148 (DIE), 186–191 (KTKPTQ), and lysine 222 each bind CTP. UTP is bound by residues 186 to 191 (KTKPTQ) and lysine 222. In terms of domain architecture, Glutamine amidotransferase type-1 spans 292 to 545 (TIAVVGKYVD…VKASRARKAG (254 aa)). Residue glycine 353 coordinates L-glutamine. Cysteine 380 serves as the catalytic Nucleophile; for glutamine hydrolysis. L-glutamine contacts are provided by residues 381-384 (YGMQ), glutamate 404, and arginine 471. Active-site residues include histidine 518 and glutamate 520.

Belongs to the CTP synthase family. Homotetramer.

It carries out the reaction UTP + L-glutamine + ATP + H2O = CTP + L-glutamate + ADP + phosphate + 2 H(+). The enzyme catalyses L-glutamine + H2O = L-glutamate + NH4(+). The catalysed reaction is UTP + NH4(+) + ATP = CTP + ADP + phosphate + 2 H(+). The protein operates within pyrimidine metabolism; CTP biosynthesis via de novo pathway; CTP from UDP: step 2/2. Allosterically activated by GTP, when glutamine is the substrate; GTP has no effect on the reaction when ammonia is the substrate. The allosteric effector GTP functions by stabilizing the protein conformation that binds the tetrahedral intermediate(s) formed during glutamine hydrolysis. Inhibited by the product CTP, via allosteric rather than competitive inhibition. Functionally, catalyzes the ATP-dependent amination of UTP to CTP with either L-glutamine or ammonia as the source of nitrogen. Regulates intracellular CTP levels through interactions with the four ribonucleotide triphosphates. The protein is CTP synthase of Xylella fastidiosa (strain M23).